Here is a 605-residue protein sequence, read N- to C-terminus: MVSYWPVLIVLCLLPICHAKSYFADFVNGKGPFKQADALKFMDKMTILNKLQADILGIPQPDEFSALDFEDKIESKPDEIPYLFEGDMVLTDEQMDLIIKNVRDQYWARKSSTNEFLYAIRGKRSMTSFLSERWSFPVPYYIDTSSGVNTNAVLAGVAKWEQETCARFTRLNSYSSSSRQNALRFISGNGCYSNIGKVSRFPQDVSIGWGCTSLGTVCHEIGHALGFYHEQARYDRDDYVSILTQNIQDMYLSQFTKQSASSMVDYGVGYDYGSVMHYDQAAFSSTGGNTIATRDPNFQATIGQRVAPSFADVKRINFAYCNSTCSNYLDCQNGGYINPNDCNNCKCPPGFGGQLCDVAGTNSNGCGAGDITATSSIQTISASGALTCNYVIKAPVGAKVYFQMTAATFSRYSPCTTNYLEINYGRDFSRVGARFCASYPTISLSETNTLVVIYKGVNGARFSLNYRYDPVTFSTSAPTTTSTTTTTAPITVPTVSPTTTTTRQTTTTARTSTTTTTTQAPPTTTTSTSQCASWSACSAQCGGCGTQSRRCGTYVETVYCNTNPCTGGYCCRPFFYVTSFGTGYCRRPGADTPAAPQRYVEQRKG.

An N-terminal signal peptide occupies residues 1 to 19 (MVSYWPVLIVLCLLPICHA). Residues 20 to 124 (KSYFADFVNG…EFLYAIRGKR (105 aa)) constitute a propeptide that is removed on maturation. A Peptidase M12A domain is found at 124–322 (RSMTSFLSER…VKRINFAYCN (199 aa)). Cystine bridges form between Cys-165–Cys-321 and Cys-191–Cys-211. His-219 serves as a coordination point for Zn(2+). Residue Glu-220 is part of the active site. The Zn(2+) site is built by His-223 and His-229. Positions 317–357 (NFAYCNSTCSNYLDCQNGGYINPNDCNNCKCPPGFGGQLCD) constitute an EGF-like domain. Asn-322 is a glycosylation site (N-linked (GlcNAc...) asparagine). 4 disulfides stabilise this stretch: Cys-325-Cys-345, Cys-347-Cys-356, Cys-366-Cys-388, and Cys-415-Cys-436. Residues 366 to 469 (CGAGDITATS…ARFSLNYRYD (104 aa)) enclose the CUB domain. Residues 479 to 526 (TTTSTTTTTAPITVPTVSPTTTTTRQTTTTARTSTTTTTTQAPPTTTT) are disordered. Residues 525–566 (TTSTSQCASWSACSAQCGGCGTQSRRCGTYVETVYCNTNPCT) enclose the TSP type-1 domain. 3 disulfide bridges follow: Cys-531–Cys-551, Cys-537–Cys-560, and Cys-541–Cys-565.

Zn(2+) is required as a cofactor. Expressed in hypodermal cells. First expressed in the dorsal and lateral surface area of the middle and posterior region of embryos. At later stages, it localizes to lateral surface regions, probably corresponding to hypodermal seam cells. In L1 larvae, it is expressed in seam cells and in a few cells anterior to the nerve ring.

It is found in the secreted. Metalloprotease. Required for normal hatching and migration of neuroblasts. May act by degrading eggshell proteins at hatching. This Caenorhabditis elegans protein is Zinc metalloproteinase nas-34 (hch-1).